A 467-amino-acid chain; its full sequence is Hydroxymethylglutaryl-CoA synthase erg13A (467 aa).

A35 serves as a coordination point for (3S)-3-hydroxy-3-methylglutaryl-CoA. E86 acts as the Proton donor/acceptor in catalysis. C118, T160, S209, H259, K268, N334, and S368 together coordinate (3S)-3-hydroxy-3-methylglutaryl-CoA. The active-site Acyl-thioester intermediate is the C118. H259 acts as the Proton donor/acceptor in catalysis.

Belongs to the thiolase-like superfamily. HMG-CoA synthase family.

The catalysed reaction is acetoacetyl-CoA + acetyl-CoA + H2O = (3S)-3-hydroxy-3-methylglutaryl-CoA + CoA + H(+). It participates in metabolic intermediate biosynthesis; (R)-mevalonate biosynthesis; (R)-mevalonate from acetyl-CoA: step 2/3. Its function is as follows. Hydroxymethylglutaryl-CoA synthase; part of the first module of ergosterol biosynthesis pathway that includes the early steps of the pathway, conserved across all eukaryotes, and which results in the formation of mevalonate from acetyl-coenzyme A (acetyl-CoA). Erg13A and erg13B condense acetyl-CoA with acetoacetyl-CoA to form hydroxymethylglutaryl-CoA (HMG-CoA). The first module starts with the action of the cytosolic acetyl-CoA acetyltransferase erg10B that catalyzes the formation of acetoacetyl-CoA. The hydroxymethylglutaryl-CoA synthases erg13A and erg13B then condense acetyl-CoA with acetoacetyl-CoA to form HMG-CoA. The rate-limiting step of the early module is the reduction to mevalonate by the 3-hydroxy-3-methylglutaryl-coenzyme A (HMG-CoA) reductases hmg1 and hmg2. Mevalonate is also a precursor for the extracellular siderophore triacetylfusarinine C (TAFC). This chain is Hydroxymethylglutaryl-CoA synthase erg13A, found in Aspergillus fumigatus (strain ATCC MYA-4609 / CBS 101355 / FGSC A1100 / Af293) (Neosartorya fumigata).